The primary structure comprises 134 residues: Ribosome-binding factor A (134 aa).

It belongs to the RbfA family. Monomer. Binds 30S ribosomal subunits, but not 50S ribosomal subunits or 70S ribosomes.

The protein localises to the cytoplasm. Functionally, one of several proteins that assist in the late maturation steps of the functional core of the 30S ribosomal subunit. Associates with free 30S ribosomal subunits (but not with 30S subunits that are part of 70S ribosomes or polysomes). Required for efficient processing of 16S rRNA. May interact with the 5'-terminal helix region of 16S rRNA. This chain is Ribosome-binding factor A, found in Rhizobium etli (strain CIAT 652).